Reading from the N-terminus, the 245-residue chain is 1-(5-phosphoribosyl)-5-[(5-phosphoribosylamino)methylideneamino] imidazole-4-carboxamide isomerase (245 aa).

Asp7 serves as the catalytic Proton acceptor. Asp129 (proton donor) is an active-site residue.

This sequence belongs to the HisA/HisF family.

Its subcellular location is the cytoplasm. The enzyme catalyses 1-(5-phospho-beta-D-ribosyl)-5-[(5-phospho-beta-D-ribosylamino)methylideneamino]imidazole-4-carboxamide = 5-[(5-phospho-1-deoxy-D-ribulos-1-ylimino)methylamino]-1-(5-phospho-beta-D-ribosyl)imidazole-4-carboxamide. It participates in amino-acid biosynthesis; L-histidine biosynthesis; L-histidine from 5-phospho-alpha-D-ribose 1-diphosphate: step 4/9. This is 1-(5-phosphoribosyl)-5-[(5-phosphoribosylamino)methylideneamino] imidazole-4-carboxamide isomerase from Shewanella baltica (strain OS223).